The primary structure comprises 204 residues: High frequency lysogenization protein HflD homolog (204 aa).

Belongs to the HflD family.

It is found in the cytoplasm. Its subcellular location is the cell inner membrane. This chain is High frequency lysogenization protein HflD homolog, found in Stenotrophomonas maltophilia (strain K279a).